The sequence spans 693 residues: Oxysterol-binding protein-related protein 2B (693 aa).

Over residues 1-15 (MPLTRSKSLPATENG) the composition is skewed to polar residues. The interval 1-22 (MPLTRSKSLPATENGGSDRETL) is disordered. The 130-residue stretch at 25 to 154 (GRSVAGILYK…WLQALASTRG (130 aa)) folds into the PH domain. The stretch at 207-239 (EVQEQIKLLHEERKKLLDALRQLEMANLEAEAS) forms a coiled coil. Disordered stretches follow at residues 256-298 (LGRG…GEPD) and 600-639 (EKLP…RMSR). Acidic residues predominate over residues 274-284 (QEFEDISEEDE). Composition is skewed to basic and acidic residues over residues 285–294 (ASFHDTKESF) and 600–635 (EKLP…ERRQ). Residues 612–643 (DQRHLENGEYEKANEEKQRLERRQRMSRQIQE) are a coiled coil.

The protein belongs to the OSBP family. In terms of tissue distribution, expressed in roots, leaves, stems and flowers.

Its function is as follows. May be involved in the transport of sterols. This chain is Oxysterol-binding protein-related protein 2B (ORP2B), found in Arabidopsis thaliana (Mouse-ear cress).